A 223-amino-acid polypeptide reads, in one-letter code: Guanylate kinase (223 aa).

The disordered stretch occupies residues Met-1 to Arg-22. A compositionally biased stretch (basic and acidic residues) spans Pro-7–Gly-19. The region spanning Gly-21–Val-201 is the Guanylate kinase-like domain. Gly-28 to Ser-35 is a binding site for ATP. The disordered stretch occupies residues Ala-204–Asp-223. The span at Gly-212 to Asp-223 shows a compositional bias: polar residues.

This sequence belongs to the guanylate kinase family.

It is found in the cytoplasm. The catalysed reaction is GMP + ATP = GDP + ADP. Functionally, essential for recycling GMP and indirectly, cGMP. The protein is Guanylate kinase of Mycolicibacterium paratuberculosis (strain ATCC BAA-968 / K-10) (Mycobacterium paratuberculosis).